Here is a 327-residue protein sequence, read N- to C-terminus: MVREKVKVSTRTLQWKCVESRRDSKRLYYGRFILSPLMKGQADTIGIAMRRALLGEIEGTCITRAKSENIPHDYSNIVGIQESVHEILMNLNEIVLRSNLYGTRNALICVQGPGYITARDIILPPSVEIIDNTQHIATLTEPIDLCIELKIERNRGYSLKMSNNFEDRSYPIDAVFMPVQNANHSIHSYGNGNEKQEILFLEIWTNGSLTPKEALHEASRNLINLFIPFLHVEEETVYLENNQHQVTLPFFPFHNRLVNLRKKKKELAFQYIFIDQLELPPRIYNCLKKSNIHTLLDLLNNSQEDLIKIEHFHIEDVKKILDILEKK.

Positions 1-233 are alpha N-terminal domain (alpha-NTD); sequence MVREKVKVST…NLFIPFLHVE (233 aa). Residues 265 to 327 form an alpha C-terminal domain (alpha-CTD) region; it reads KELAFQYIFI…KKILDILEKK (63 aa).

This sequence belongs to the RNA polymerase alpha chain family. As to quaternary structure, in plastids the minimal PEP RNA polymerase catalytic core is composed of four subunits: alpha, beta, beta', and beta''. When a (nuclear-encoded) sigma factor is associated with the core the holoenzyme is formed, which can initiate transcription.

Its subcellular location is the plastid. It localises to the chloroplast. It carries out the reaction RNA(n) + a ribonucleoside 5'-triphosphate = RNA(n+1) + diphosphate. In terms of biological role, DNA-dependent RNA polymerase catalyzes the transcription of DNA into RNA using the four ribonucleoside triphosphates as substrates. This chain is DNA-directed RNA polymerase subunit alpha, found in Olimarabidopsis pumila (Dwarf rocket).